We begin with the raw amino-acid sequence, 435 residues long: Monodehydroascorbate reductase 2 (435 aa).

FAD is bound by residues 14-17, glutamate 41, arginine 48, lysine 53, isoleucine 96, and 147-148; these read GGVA and RE. Residues 172-178, glutamate 196, arginine 202, and glycine 261 each bind NAD(+); that span reads GGYIGLE. 174-178 contributes to the NADP(+) binding site; it reads YIGLE. The NADP(+) site is built by arginine 202 and glycine 261. Aspartate 298 provides a ligand contact to FAD. An NAD(+)-binding site is contributed by 314–315; it reads EH. 314–315 is a binding site for NADP(+); the sequence is EH. Valine 316 provides a ligand contact to FAD. An L-ascorbate-binding site is contributed by arginine 320. Tyrosine 349 serves as a coordination point for FAD. Tyrosine 349 contacts NAD(+). Tyrosine 349 provides a ligand contact to NADP(+). Arginine 351 provides a ligand contact to L-ascorbate. Serine 417 is modified (phosphoserine).

This sequence belongs to the FAD-dependent oxidoreductase family. It depends on FAD as a cofactor.

The protein resides in the cytoplasm. It carries out the reaction 2 monodehydro-L-ascorbate radical + NADH + H(+) = 2 L-ascorbate + NAD(+). Its function is as follows. Catalyzes the conversion of monodehydroascorbate to ascorbate, oxidizing NADH in the process. The polypeptide is Monodehydroascorbate reductase 2 (Arabidopsis thaliana (Mouse-ear cress)).